The primary structure comprises 492 residues: MDPYKYRPSSAFNSPFWTTNSGAPVWNNNNSLTVGTRGPILLEDYHLVEKLANFDRERIPERVVHARGASAKGFFEVTHDVSHLTCADFLRAPGVQTPVIVRFSTVIHERGSPETLRDPRGFAVKFYTREGNFDLVGNNLPVFFVRDGMKFPDMVHALKPNPKNHIQENWRILDFFSHFPESLHMFSFLFDDLGVPQDYRHMDGFGVNTYTLINKAGKAVYVKFHWKTTSGVKCLLEEEAIKVGGANHSHATQDLHDSIAAGNYPEWKLFIQTIDPEHEDKFDFDPLDVTKTWPEDIIPLQPVGRLVLNKNIDNFFAENEQLAFCPAIIVPGVYYSDDKMLQTRIFSYADSQRHRLGPNYLLLPANAPKSAHHNNHHEGFMNFIHRDEEVNYFPSRYDPVRHAEKFPIPPAVFSGRREKIAIEKENNFKQAGERFRSWAPDRQDRFIRRWVDALSDPRVTHEIRSVWISYWSQADRSLGQKIASHLNMRPNI.

Active-site residues include H65 and N138. Y348 is a binding site for heme.

It belongs to the catalase family. Homotetramer. The cofactor is heme.

The protein resides in the cytoplasm. The protein localises to the cytosol. Its subcellular location is the peroxisome matrix. The enzyme catalyses 2 H2O2 = O2 + 2 H2O. In terms of biological role, catalyzes the degradation of hydrogen peroxide (H(2)O(2)) generated by peroxisomal oxidases to water and oxygen, thereby protecting cells from the toxic effects of hydrogen peroxide. The protein is Catalase of Vigna radiata var. radiata (Mung bean).